Here is a 112-residue protein sequence, read N- to C-terminus: Ribonuclease P protein component (112 aa).

The protein belongs to the RnpA family. In terms of assembly, consists of a catalytic RNA component (M1 or rnpB) and a protein subunit.

The enzyme catalyses Endonucleolytic cleavage of RNA, removing 5'-extranucleotides from tRNA precursor.. Functionally, RNaseP catalyzes the removal of the 5'-leader sequence from pre-tRNA to produce the mature 5'-terminus. It can also cleave other RNA substrates such as 4.5S RNA. The protein component plays an auxiliary but essential role in vivo by binding to the 5'-leader sequence and broadening the substrate specificity of the ribozyme. This Clostridium kluyveri (strain ATCC 8527 / DSM 555 / NBRC 12016 / NCIMB 10680 / K1) protein is Ribonuclease P protein component.